Reading from the N-terminus, the 272-residue chain is Ribosomal RNA small subunit methyltransferase A (272 aa).

Asparagine 20, leucine 22, glycine 47, glutamate 68, aspartate 93, and asparagine 114 together coordinate S-adenosyl-L-methionine.

Belongs to the class I-like SAM-binding methyltransferase superfamily. rRNA adenine N(6)-methyltransferase family. RsmA subfamily.

The protein localises to the cytoplasm. It catalyses the reaction adenosine(1518)/adenosine(1519) in 16S rRNA + 4 S-adenosyl-L-methionine = N(6)-dimethyladenosine(1518)/N(6)-dimethyladenosine(1519) in 16S rRNA + 4 S-adenosyl-L-homocysteine + 4 H(+). Its function is as follows. Specifically dimethylates two adjacent adenosines (A1518 and A1519) in the loop of a conserved hairpin near the 3'-end of 16S rRNA in the 30S particle. May play a critical role in biogenesis of 30S subunits. The polypeptide is Ribosomal RNA small subunit methyltransferase A (Aliivibrio fischeri (strain ATCC 700601 / ES114) (Vibrio fischeri)).